We begin with the raw amino-acid sequence, 109 residues long: Parvalbumin beta (109 aa).

EF-hand domains lie at 38–73 (KSKDQLTKVFGVIDRDKSGYIEEDELKKFLQNFDGK) and 77–109 (LTDKETAEFLKEGDTDGDGKIGVEEFVVLVTKG). Ca(2+)-binding residues include Asp-51, Asp-53, Ser-55, Tyr-57, Glu-59, Glu-62, Asp-90, Asp-92, Asp-94, Lys-96, and Glu-101.

The protein belongs to the parvalbumin family.

Its function is as follows. In muscle, parvalbumin is thought to be involved in relaxation after contraction. It binds two calcium ions. In Boa constrictor (Boa), this protein is Parvalbumin beta.